Here is a 106-residue protein sequence, read N- to C-terminus: Small ribosomal subunit protein bS20 (106 aa).

Residues 1–32 (MAQKKPKRNLSALKRHRQSLKRRLRNKAKKSA) show a composition bias toward basic residues. Residues 1–33 (MAQKKPKRNLSALKRHRQSLKRRLRNKAKKSAI) form a disordered region.

This sequence belongs to the bacterial ribosomal protein bS20 family.

In terms of biological role, binds directly to 16S ribosomal RNA. The protein is Small ribosomal subunit protein bS20 (rpsT) of Thermus thermophilus (strain ATCC BAA-163 / DSM 7039 / HB27).